The following is a 73-amino-acid chain: Translation initiation factor IF-1 (73 aa).

One can recognise an S1-like domain in the interval 1-72 (MSKDDLIQFT…TKGRVILRHQ (72 aa)).

The protein belongs to the IF-1 family. In terms of assembly, component of the 30S ribosomal translation pre-initiation complex which assembles on the 30S ribosome in the order IF-2 and IF-3, IF-1 and N-formylmethionyl-tRNA(fMet); mRNA recruitment can occur at any time during PIC assembly.

The protein localises to the cytoplasm. Its function is as follows. One of the essential components for the initiation of protein synthesis. Stabilizes the binding of IF-2 and IF-3 on the 30S subunit to which N-formylmethionyl-tRNA(fMet) subsequently binds. Helps modulate mRNA selection, yielding the 30S pre-initiation complex (PIC). Upon addition of the 50S ribosomal subunit IF-1, IF-2 and IF-3 are released leaving the mature 70S translation initiation complex. The chain is Translation initiation factor IF-1 from Rickettsia bellii (strain OSU 85-389).